We begin with the raw amino-acid sequence, 565 residues long: Putative lipase ATG15 (565 aa).

At 1–21 (MISNDYTKFSSKRRSLRYSNR) the chain is on the cytoplasmic side. Residues 22 to 42 (ILLLMGTILLIVVYFYSDILV) traverse the membrane as a helical; Signal-anchor for type II membrane protein segment. Residues 43-565 (DKSIIMFRNE…EYTTFTKRLI (523 aa)) are Lumenal-facing. Asn-217 carries N-linked (GlcNAc...) asparagine glycosylation. Residue Ser-347 is the Charge relay system of the active site. The segment at 488 to 538 (KKPKKQTTSSSSEKVDTSTTKSIDRTTITTRTNEKKWHPNPKDPSTTTTDD) is disordered. Residues 493 to 518 (QTTSSSSEKVDTSTTKSIDRTTITTR) show a composition bias toward low complexity. The segment covering 519 to 528 (TNEKKWHPNP) has biased composition (basic and acidic residues).

This sequence belongs to the AB hydrolase superfamily. Lipase family. As to quaternary structure, binds to both phosphatidylinositol (PI) and phosphatidylinositol 3,5-bisphosphate (PIP2).

It is found in the endosome. The protein resides in the multivesicular body membrane. The protein localises to the prevacuolar compartment membrane. The enzyme catalyses a triacylglycerol + H2O = a diacylglycerol + a fatty acid + H(+). Functionally, lipase which is essential for lysis of subvacuolar cytoplasm to vacuole targeted bodies and intravacuolar autophagic bodies. Involved in the lysis of intravacuolar multivesicular body (MVB) vesicles. The intravacuolar membrane disintegration by ATG15 is critical to life span extension. The chain is Putative lipase ATG15 (ATG15) from Vanderwaltozyma polyspora (strain ATCC 22028 / DSM 70294 / BCRC 21397 / CBS 2163 / NBRC 10782 / NRRL Y-8283 / UCD 57-17) (Kluyveromyces polysporus).